The following is a 309-amino-acid chain: Porphobilinogen deaminase (309 aa).

Cysteine 243 is subject to S-(dipyrrolylmethanemethyl)cysteine.

This sequence belongs to the HMBS family. In terms of assembly, monomer. The cofactor is dipyrromethane.

The enzyme catalyses 4 porphobilinogen + H2O = hydroxymethylbilane + 4 NH4(+). The protein operates within porphyrin-containing compound metabolism; protoporphyrin-IX biosynthesis; coproporphyrinogen-III from 5-aminolevulinate: step 2/4. In terms of biological role, tetrapolymerization of the monopyrrole PBG into the hydroxymethylbilane pre-uroporphyrinogen in several discrete steps. This chain is Porphobilinogen deaminase, found in Deinococcus geothermalis (strain DSM 11300 / CIP 105573 / AG-3a).